The primary structure comprises 291 residues: ATP synthase gamma chain (291 aa).

This sequence belongs to the ATPase gamma chain family. As to quaternary structure, F-type ATPases have 2 components, CF(1) - the catalytic core - and CF(0) - the membrane proton channel. CF(1) has five subunits: alpha(3), beta(3), gamma(1), delta(1), epsilon(1). CF(0) has three main subunits: a, b and c.

The protein localises to the cell inner membrane. In terms of biological role, produces ATP from ADP in the presence of a proton gradient across the membrane. The gamma chain is believed to be important in regulating ATPase activity and the flow of protons through the CF(0) complex. This is ATP synthase gamma chain from Rhodopseudomonas palustris (strain ATCC BAA-98 / CGA009).